Reading from the N-terminus, the 420-residue chain is MLDKNLLKTNSKEIREQLKSRSFNLDWYDEFLRLEKQLSTLLRTIEKLNEQKNINAKKAATTESDAQRKKLIQEGGLLRAELEKNEAKYNEIKEDFDYIYQRIPNLPTEDVPIGKDEKENVEMFKSRKPTFFDFKPLPHYELATKLEMIGLDVASKITGSRFSIYKKDGARLMRAIQQFCLYVNADKYEEYLPPVIVNKDSYYGSGQFPKFVEDVFKLEGTNYYLASTAEVQLVNLHRNEILKEADLPKYYTASTACFRSEAGSAGKDTKGLIRQHQFYKTELVKIVHPSTSKQEHEAMAKDAEKILELLELPYRRMVLCTGDMGFSATKTYDLEVWIPSENKYREISSISNCGDFQARRANIKFKDAISKKNLYVHTLNASALAHDRLFVAIVENYQQKDGSIKIPKALVKYFGKEYIK.

228 to 230 contributes to the L-serine binding site; it reads TAE. 259 to 261 serves as a coordination point for ATP; sequence RSE. E282 provides a ligand contact to L-serine. 346–349 lines the ATP pocket; that stretch reads EISS. Residue S382 participates in L-serine binding.

This sequence belongs to the class-II aminoacyl-tRNA synthetase family. Type-1 seryl-tRNA synthetase subfamily. In terms of assembly, homodimer. The tRNA molecule binds across the dimer.

The protein localises to the cytoplasm. The catalysed reaction is tRNA(Ser) + L-serine + ATP = L-seryl-tRNA(Ser) + AMP + diphosphate + H(+). The enzyme catalyses tRNA(Sec) + L-serine + ATP = L-seryl-tRNA(Sec) + AMP + diphosphate + H(+). It functions in the pathway aminoacyl-tRNA biosynthesis; selenocysteinyl-tRNA(Sec) biosynthesis; L-seryl-tRNA(Sec) from L-serine and tRNA(Sec): step 1/1. Its function is as follows. Catalyzes the attachment of serine to tRNA(Ser). Is also able to aminoacylate tRNA(Sec) with serine, to form the misacylated tRNA L-seryl-tRNA(Sec), which will be further converted into selenocysteinyl-tRNA(Sec). The sequence is that of Serine--tRNA ligase from Mycoplasmoides gallisepticum (strain R(low / passage 15 / clone 2)) (Mycoplasma gallisepticum).